The following is a 572-amino-acid chain: Proline--tRNA ligase (572 aa).

Belongs to the class-II aminoacyl-tRNA synthetase family. ProS type 1 subfamily. As to quaternary structure, homodimer.

It is found in the cytoplasm. The catalysed reaction is tRNA(Pro) + L-proline + ATP = L-prolyl-tRNA(Pro) + AMP + diphosphate. Catalyzes the attachment of proline to tRNA(Pro) in a two-step reaction: proline is first activated by ATP to form Pro-AMP and then transferred to the acceptor end of tRNA(Pro). As ProRS can inadvertently accommodate and process non-cognate amino acids such as alanine and cysteine, to avoid such errors it has two additional distinct editing activities against alanine. One activity is designated as 'pretransfer' editing and involves the tRNA(Pro)-independent hydrolysis of activated Ala-AMP. The other activity is designated 'posttransfer' editing and involves deacylation of mischarged Ala-tRNA(Pro). The misacylated Cys-tRNA(Pro) is not edited by ProRS. The chain is Proline--tRNA ligase from Salmonella newport (strain SL254).